A 190-amino-acid chain; its full sequence is Biphenyl-2,3-diol 1,2-dioxygenase 3 (190 aa).

Positions 6-125 (RLAHFVLQTN…DGNMVELQID (120 aa)) constitute a VOC domain. Fe cation-binding residues include His9, His73, and Glu121.

This sequence belongs to the extradiol ring-cleavage dioxygenase family. As to quaternary structure, homohexamer. It depends on Fe(2+) as a cofactor.

The enzyme catalyses biphenyl-2,3-diol + O2 = 2-hydroxy-6-oxo-6-phenylhexa-2,4-dienoate + H(+). It functions in the pathway xenobiotic degradation; biphenyl degradation; 2-hydroxy-2,4-pentadienoate and benzoate from biphenyl: step 3/4. The chain is Biphenyl-2,3-diol 1,2-dioxygenase 3 (bphC3) from Rhodococcus globerulus.